Reading from the N-terminus, the 381-residue chain is Spermidine/putrescine import ATP-binding protein PotA (381 aa).

In terms of domain architecture, ABC transporter spans 22-252 (VELRNVFKFF…PKTSFVADFI (231 aa)). 54–61 (GPSGCGKT) lines the ATP pocket.

Belongs to the ABC transporter superfamily. Spermidine/putrescine importer (TC 3.A.1.11.1) family. As to quaternary structure, the complex is composed of two ATP-binding proteins (PotA), two transmembrane proteins (PotB and PotC) and a solute-binding protein (PotD).

The protein resides in the cell inner membrane. The catalysed reaction is ATP + H2O + polyamine-[polyamine-binding protein]Side 1 = ADP + phosphate + polyamineSide 2 + [polyamine-binding protein]Side 1.. Functionally, part of the ABC transporter complex PotABCD involved in spermidine/putrescine import. Responsible for energy coupling to the transport system. This chain is Spermidine/putrescine import ATP-binding protein PotA, found in Trichormus variabilis (strain ATCC 29413 / PCC 7937) (Anabaena variabilis).